A 142-amino-acid polypeptide reads, in one-letter code: Large ribosomal subunit protein uL11 (142 aa).

Belongs to the universal ribosomal protein uL11 family. Part of the ribosomal stalk of the 50S ribosomal subunit. Interacts with L10 and the large rRNA to form the base of the stalk. L10 forms an elongated spine to which L12 dimers bind in a sequential fashion forming a multimeric L10(L12)X complex. One or more lysine residues are methylated.

Forms part of the ribosomal stalk which helps the ribosome interact with GTP-bound translation factors. This Vesicomyosocius okutanii subsp. Calyptogena okutanii (strain HA) protein is Large ribosomal subunit protein uL11.